We begin with the raw amino-acid sequence, 367 residues long: Molybdopterin synthase catalytic subunit (367 aa).

Residues 101–102, K117, and 124–126 each bind substrate; these read HR and KKE. The segment at 325 to 350 is disordered; it reads RHFTKREPSSMEAAPPKKSRKKSYSA.

This sequence belongs to the MoaE family. MOCS2B subfamily. As to quaternary structure, heterotetramer; composed of 2 small (Mocs2A) and 2 large (Mocs2B) subunits. Component of the Ada2a-containing (ATAC) complex composed of at least Ada2a, Atac1, Hcf, Ada3, Gcn5, Mocs2B, Charac-14, Atac3, Atac2, NC2beta and wds.

It localises to the cytoplasm. It is found in the nucleus. The enzyme catalyses 2 [molybdopterin-synthase sulfur-carrier protein]-C-terminal-Gly-aminoethanethioate + cyclic pyranopterin phosphate + H2O = molybdopterin + 2 [molybdopterin-synthase sulfur-carrier protein]-C-terminal Gly-Gly + 2 H(+). The protein operates within cofactor biosynthesis; molybdopterin biosynthesis. Functionally, catalytic subunit of the molybdopterin synthase complex, a complex that catalyzes the conversion of precursor Z into molybdopterin. Acts by mediating the incorporation of 2 sulfur atoms from thiocarboxylated Mocs2A into precursor Z to generate a dithiolene group. Involved during biosynthesis of the molybdenum cofactor. This is Molybdopterin synthase catalytic subunit from Drosophila melanogaster (Fruit fly).